The primary structure comprises 133 residues: Holo-[acyl-carrier-protein] synthase (133 aa).

Mg(2+) contacts are provided by Asp-8 and Glu-56.

Belongs to the P-Pant transferase superfamily. AcpS family. Mg(2+) serves as cofactor.

It is found in the cytoplasm. The catalysed reaction is apo-[ACP] + CoA = holo-[ACP] + adenosine 3',5'-bisphosphate + H(+). In terms of biological role, transfers the 4'-phosphopantetheine moiety from coenzyme A to a Ser of acyl-carrier-protein. This chain is Holo-[acyl-carrier-protein] synthase, found in Clostridium perfringens (strain ATCC 13124 / DSM 756 / JCM 1290 / NCIMB 6125 / NCTC 8237 / Type A).